The sequence spans 403 residues: Heparan-sulfate 6-O-sulfotransferase 2 (403 aa).

Topologically, residues methionine 1 to lysine 7 are cytoplasmic. Residues valine 8–proline 28 traverse the membrane as a helical; Signal-anchor for type II membrane protein segment. Residues glycine 29–arginine 403 lie on the Lumenal side of the membrane. Asparagine 64 carries N-linked (GlcNAc...) asparagine glycosylation. Histidine 88 to threonine 96 provides a ligand contact to 3'-phosphoadenylyl sulfate. Substrate is bound by residues lysine 118–lysine 119, arginine 135, tryptophan 140, and histidine 145. The active-site Proton acceptor is histidine 145. Arginine 180 and serine 188 together coordinate 3'-phosphoadenylyl sulfate. 2 residues coordinate substrate: histidine 192 and tryptophan 199. A glycan (N-linked (GlcNAc...) asparagine) is linked at asparagine 259. A 3'-phosphoadenylyl sulfate-binding site is contributed by threonine 312–tyrosine 314. N-linked (GlcNAc...) asparagine glycosylation occurs at asparagine 315. A 3'-phosphoadenylyl sulfate-binding site is contributed by arginine 318–alanine 319. The interval alanine 381–arginine 403 is disordered. N-linked (GlcNAc...) asparagine glycosylation is present at asparagine 389.

It belongs to the sulfotransferase 6 family.

It is found in the membrane. The catalysed reaction is alpha-D-glucosaminyl-[heparan sulfate](n) + 3'-phosphoadenylyl sulfate = 6-sulfo-alpha-D-glucosaminyl-[heparan sulfate](n) + adenosine 3',5'-bisphosphate + H(+). In terms of biological role, 6-O-sulfation enzyme which catalyzes the transfer of sulfate from 3'-phosphoadenosine 5'-phosphosulfate (PAPS) to position 6 of the N-sulfoglucosamine residue (GlcNS) of heparan sulfate. May also play a role in limb development. The polypeptide is Heparan-sulfate 6-O-sulfotransferase 2 (HS6ST2) (Gallus gallus (Chicken)).